A 403-amino-acid chain; its full sequence is Alkaline protease 1 (403 aa).

An N-terminal signal peptide occupies residues 1–21 (MHSFKRSLLLLGALLPAVFGA). Residues 22–124 (PVEPRRAAEK…QIWYIDALTS (103 aa)) constitute a propeptide that is removed on maturation. One can recognise an Inhibitor I9 domain in the interval 35-119 (KYIVTFKSGL…HVEEDQIWYI (85 aa)). The region spanning 129 to 403 (PWGLGAISHK…NLLAYNGADE (275 aa)) is the Peptidase S8 domain. Residues D161 and H192 each act as charge relay system in the active site. Residue N252 is glycosylated (N-linked (GlcNAc...) asparagine). S348 functions as the Charge relay system in the catalytic mechanism.

This sequence belongs to the peptidase S8 family.

It localises to the secreted. The enzyme catalyses Hydrolysis of proteins with broad specificity, and of Bz-Arg-OEt &gt; Ac-Tyr-OEt. Does not hydrolyze peptide amides.. Secreted alkaline protease that allows assimilation of proteinaceous substrates. The chain is Alkaline protease 1 (alp1) from Emericella nidulans (strain FGSC A4 / ATCC 38163 / CBS 112.46 / NRRL 194 / M139) (Aspergillus nidulans).